Reading from the N-terminus, the 275-residue chain is ATP synthase subunit delta (275 aa).

The protein belongs to the ATPase delta chain family. In terms of assembly, F-type ATPases have 2 components, F(1) - the catalytic core - and F(0) - the membrane proton channel. F(1) has five subunits: alpha(3), beta(3), gamma(1), delta(1), epsilon(1). F(0) has three main subunits: a(1), b(2) and c(10-14). The alpha and beta chains form an alternating ring which encloses part of the gamma chain. F(1) is attached to F(0) by a central stalk formed by the gamma and epsilon chains, while a peripheral stalk is formed by the delta and b chains.

The protein resides in the cell membrane. Its function is as follows. F(1)F(0) ATP synthase produces ATP from ADP in the presence of a proton or sodium gradient. F-type ATPases consist of two structural domains, F(1) containing the extramembraneous catalytic core and F(0) containing the membrane proton channel, linked together by a central stalk and a peripheral stalk. During catalysis, ATP synthesis in the catalytic domain of F(1) is coupled via a rotary mechanism of the central stalk subunits to proton translocation. In terms of biological role, this protein is part of the stalk that links CF(0) to CF(1). It either transmits conformational changes from CF(0) to CF(1) or is implicated in proton conduction. The polypeptide is ATP synthase subunit delta (Pseudarthrobacter chlorophenolicus (strain ATCC 700700 / DSM 12829 / CIP 107037 / JCM 12360 / KCTC 9906 / NCIMB 13794 / A6) (Arthrobacter chlorophenolicus)).